Here is a 508-residue protein sequence, read N- to C-terminus: Potassium/proton antiporter CemA (508 aa).

A run of 5 helical transmembrane segments spans residues 66 to 86, 282 to 302, 386 to 406, 433 to 453, and 468 to 488; these read LFII…LNLL, YQAL…WIIS, ILHL…FILG, ILLL…EVVI, and IISC…KYWI.

It belongs to the CemA family.

Its subcellular location is the plastid. The protein localises to the chloroplast inner membrane. It catalyses the reaction K(+)(in) + H(+)(out) = K(+)(out) + H(+)(in). Functionally, contributes to K(+)/H(+) antiport activity by supporting proton efflux to control proton extrusion and homeostasis in chloroplasts in a light-dependent manner to modulate photosynthesis. Prevents excessive induction of non-photochemical quenching (NPQ) under continuous-light conditions. Indirectly promotes efficient inorganic carbon uptake into chloroplasts. In Anthoceros angustus (Hornwort), this protein is Potassium/proton antiporter CemA.